Reading from the N-terminus, the 301-residue chain is Mating type protein mtA-1 (301 aa).

The alpha box DNA-binding region spans 49-104 (APKKKVNGFMGFRSYYSSLFSQFPQKARSPFMTILWQHDPFHNEWDFMCSVYSSIR).

This sequence belongs to the MATALPHA1 family.

The protein localises to the nucleus. Its function is as follows. Mating type proteins are sequence specific DNA-binding proteins that act as master switches in fungal differentiation by controlling gene expression in a cell type-specific fashion. Transcriptional activator that induces the transcription of alpha-specific genes. The polypeptide is Mating type protein mtA-1 (MTA1) (Sordaria fimicola).